A 212-amino-acid polypeptide reads, in one-letter code: uncharacterized protein (212 aa).

The first 21 residues, 1–21, serve as a signal peptide directing secretion; that stretch reads MRRLTAFGLALLLLASGVARG.

To E.coli YfaT and T.maritima TM0986.

This is an uncharacterized protein from Pseudomonas aeruginosa (strain ATCC 15692 / DSM 22644 / CIP 104116 / JCM 14847 / LMG 12228 / 1C / PRS 101 / PAO1).